Consider the following 179-residue polypeptide: M-zodatoxin-Lt4b (179 aa).

The N-terminal stretch at Met1–Ser22 is a signal peptide. A propeptide spanning residues Glu23–Arg43 is cleaved from the precursor. The short motif at Glu40–Arg43 is the Processing quadruplet motif 1 element. Gln61 bears the Glutamine amide mark. Positions Arg63 to Ser66 match the Inverted processing quadruplet motif 1 motif. Positions Arg63–Arg71 are excised as a propeptide. The short motif at Asp68–Arg71 is the Processing quadruplet motif 2 element. Gln89 is modified (glutamine amide). Residues Arg91–Thr94 carry the Inverted processing quadruplet motif 2 motif. Positions Arg91–Arg99 are excised as a propeptide. Residues Glu96–Arg99 carry the Processing quadruplet motif 3 motif. Gln117 is subject to Glutamine amide. Positions Arg119–Ser122 match the Inverted processing quadruplet motif 3 motif. Residues Arg119 to Arg127 constitute a propeptide that is removed on maturation. Residues Glu124–Arg127 carry the Processing quadruplet motif 4 motif. Gln145 carries the glutamine amide modification. Positions Arg147 to Thr150 match the Inverted processing quadruplet motif 4 motif. Positions Arg147–Arg154 are excised as a propeptide. A Processing quadruplet motif 5 motif is present at residues Glu151–Arg154. Phe178 is subject to Phenylalanine amide.

It belongs to the cationic peptide 03 (latarcin) family. 04 subfamily. Cleavage of the propeptide depends on the processing quadruplet motif (PQM) (XXXR, with at least one of X being E) and the inverted PQM (RXXX, with at least one of X being E). In terms of tissue distribution, expressed by the venom gland.

Its subcellular location is the secreted. M-zodatoxin-Lt4b: Has antimicrobial activity against Gram-positive bacteria (A.globiformis VKM Ac-1112 (MIC=0.3 uM), and B.subtilis VKM B-501 (MIC=1.1 uM)), Gram-negative bacteria (E.coli DH5-alpha (MIC=4.4 uM), E.coli MH1 (MIC=4.4 uM), and P.aeruginosa PAO1 (MIC=&gt;35 uM)), and yeasts (P.pastoris GS115 (MIC=&gt;35 uM), and S.cerevisiae Y190 (MIC=35 uM)). Does not have hemolytic activity against rabbit erythrocytes. Causes paralysis, but is not lethal when injected into insect (M.domestica) larvae. In terms of biological role, shows no antimicrobial activity against Gram-positive bacterium B.subtilis B-501 or Gram-negative bacterium E.coli DH5-alpha at concentration up to 20 uM. In Lachesana tarabaevi (Spider), this protein is M-zodatoxin-Lt4b.